The sequence spans 259 residues: MQSTHISGGSSGGGGGGGGEVSRSGLSRIRSAPATWIETLLEEDEEEGLKPNLCLTELLTGNNNSGGVITSRDDSFEFLSSVEQGLYNHHQGGGFHRQNSSPADFLSGSGSGTDGYFSNFGIPANYDYLSTNVDISPTKRSRDMETQFSSQLKEEQMSGGISGMMDMNMDKIFEDSVPCRVRAKRGCATHPRSIAERVRRTRISDRIRRLQELVPNMDKQTNTADMLEEAVEYVKALQSQIQELTEQQKRCKCKPKEEQ.

The segment at 1-25 (MQSTHISGGSSGGGGGGGGEVSRSG) is disordered. The span at 9-20 (GSSGGGGGGGGE) shows a compositional bias: gly residues. Residues 187 to 237 (CATHPRSIAERVRRTRISDRIRRLQELVPNMDKQTNTADMLEEAVEYVKAL) form the bHLH domain.

In terms of assembly, homodimer. Expressed constitutively in roots, leaves, stems, and flowers.

Its subcellular location is the nucleus. The chain is Transcription factor bHLH80 (BHLH80) from Arabidopsis thaliana (Mouse-ear cress).